Reading from the N-terminus, the 420-residue chain is Dihydrolipoyllysine-residue succinyltransferase component of 2-oxoglutarate dehydrogenase complex (420 aa).

A Lipoyl-binding domain is found at methionine 1–glycine 76. Lysine 42 carries the post-translational modification N6-lipoyllysine. The tract at residues valine 75–lysine 199 is disordered. The segment covering asparagine 81–serine 90 has biased composition (polar residues). Over residues serine 91–proline 102 the composition is skewed to basic and acidic residues. Polar residues predominate over residues lysine 103–proline 127. The Peripheral subunit-binding (PSBD) domain maps to asparagine 124 to glutamine 160. The span at aspartate 149–asparagine 158 shows a compositional bias: basic and acidic residues. Residues serine 159–glutamine 174 are compositionally biased toward low complexity. A compositionally biased stretch (polar residues) spans asparagine 175 to serine 186. Residues histidine 391 and aspartate 395 contribute to the active site.

It belongs to the 2-oxoacid dehydrogenase family. Forms a 24-polypeptide structural core with octahedral symmetry. Part of the 2-oxoglutarate dehydrogenase (OGDH) complex composed of E1 (2-oxoglutarate dehydrogenase), E2 (dihydrolipoamide succinyltransferase) and E3 (dihydrolipoamide dehydrogenase); the complex contains multiple copies of the three enzymatic components (E1, E2 and E3). The cofactor is (R)-lipoate.

It catalyses the reaction N(6)-[(R)-dihydrolipoyl]-L-lysyl-[protein] + succinyl-CoA = N(6)-[(R)-S(8)-succinyldihydrolipoyl]-L-lysyl-[protein] + CoA. It functions in the pathway amino-acid degradation; L-lysine degradation via saccharopine pathway; glutaryl-CoA from L-lysine: step 6/6. E2 component of the 2-oxoglutarate dehydrogenase (OGDH) complex which catalyzes the second step in the conversion of 2-oxoglutarate to succinyl-CoA and CO(2). This Staphylococcus epidermidis (strain ATCC 35984 / DSM 28319 / BCRC 17069 / CCUG 31568 / BM 3577 / RP62A) protein is Dihydrolipoyllysine-residue succinyltransferase component of 2-oxoglutarate dehydrogenase complex (odhB).